The chain runs to 241 residues: MADNKANKEQVHRVFQNISKKYDRLNNIISFEQHKVWRKRVMKDMGVRKGTKALDVCCGTGDWTIALSKAVGPTGEVTGIDFSENMLEVGKEKTASMENVKLVHGDAMELPFEDNSFDYVTIGFGLRNVPDYLVALKEMNRVLKPGGMVVCLETSQPTLPVFKQMYALYFKFVMPIFGKLFAKSKEEYEWLQQSTFNFPGKEELKRMFEEAGFINVRVRSFTGGVAAMHLGYKEKDNTKGD.

Residues Thr-60, Asp-81, and 106–107 (DA) contribute to the S-adenosyl-L-methionine site.

Belongs to the class I-like SAM-binding methyltransferase superfamily. MenG/UbiE family.

It carries out the reaction a 2-demethylmenaquinol + S-adenosyl-L-methionine = a menaquinol + S-adenosyl-L-homocysteine + H(+). It participates in quinol/quinone metabolism; menaquinone biosynthesis; menaquinol from 1,4-dihydroxy-2-naphthoate: step 2/2. In terms of biological role, methyltransferase required for the conversion of demethylmenaquinol (DMKH2) to menaquinol (MKH2). The sequence is that of Demethylmenaquinone methyltransferase from Staphylococcus aureus (strain Mu3 / ATCC 700698).